A 198-amino-acid chain; its full sequence is 3-isopropylmalate dehydratase small subunit (198 aa).

The protein belongs to the LeuD family. LeuD type 1 subfamily. As to quaternary structure, heterodimer of LeuC and LeuD.

It carries out the reaction (2R,3S)-3-isopropylmalate = (2S)-2-isopropylmalate. It participates in amino-acid biosynthesis; L-leucine biosynthesis; L-leucine from 3-methyl-2-oxobutanoate: step 2/4. Functionally, catalyzes the isomerization between 2-isopropylmalate and 3-isopropylmalate, via the formation of 2-isopropylmaleate. In Mycobacterium marinum (strain ATCC BAA-535 / M), this protein is 3-isopropylmalate dehydratase small subunit.